Reading from the N-terminus, the 262-residue chain is Protein CUSTOS (262 aa).

Disordered stretches follow at residues 1 to 79 (MAAP…LQTT) and 126 to 262 (FTSV…IPAN). Over residues 9–18 (SDSESSNSSS) the composition is skewed to low complexity. Positions 51–61 (ANSQLSTSQPS) are enriched in polar residues. Ser61 is subject to Phosphoserine. The residue at position 79 (Thr79) is a Phosphothreonine. At Ser138 the chain carries Phosphoserine. The residue at position 182 (Thr182) is a Phosphothreonine. The span at 188 to 199 (KKKRKLKKKAKK) shows a compositional bias: basic residues. Over residues 200–209 (VASVDSAVAA) the composition is skewed to low complexity. Residues 210–221 (TTPTSMATVQKQ) are compositionally biased toward polar residues. Position 211 is a phosphothreonine (Thr211). The short motif at 236–241 (KKKKKA) is the Nucleolar localization signal (NLS) element.

This sequence belongs to the CUSTOS family.

Its subcellular location is the nucleus envelope. Functionally, plays a role in the regulation of Wnt signaling pathway during early development. The chain is Protein CUSTOS from Homo sapiens (Human).